The primary structure comprises 215 residues: Oligoribonuclease (215 aa).

An Exonuclease domain is found at 5-170 (LVWIDCEMTG…ADIHESIREL (166 aa)). Y127 is an active-site residue. The interval 196-215 (LGPPGKDAADTDSAAGHTTG) is disordered.

It belongs to the oligoribonuclease family.

The protein localises to the cytoplasm. Its function is as follows. 3'-to-5' exoribonuclease specific for small oligoribonucleotides. This chain is Oligoribonuclease, found in Mycobacterium sp. (strain JLS).